We begin with the raw amino-acid sequence, 476 residues long: Aspartyl/glutamyl-tRNA(Asn/Gln) amidotransferase subunit B (476 aa).

This sequence belongs to the GatB/GatE family. GatB subfamily. Heterotrimer of A, B and C subunits.

It catalyses the reaction L-glutamyl-tRNA(Gln) + L-glutamine + ATP + H2O = L-glutaminyl-tRNA(Gln) + L-glutamate + ADP + phosphate + H(+). The enzyme catalyses L-aspartyl-tRNA(Asn) + L-glutamine + ATP + H2O = L-asparaginyl-tRNA(Asn) + L-glutamate + ADP + phosphate + 2 H(+). In terms of biological role, allows the formation of correctly charged Asn-tRNA(Asn) or Gln-tRNA(Gln) through the transamidation of misacylated Asp-tRNA(Asn) or Glu-tRNA(Gln) in organisms which lack either or both of asparaginyl-tRNA or glutaminyl-tRNA synthetases. The reaction takes place in the presence of glutamine and ATP through an activated phospho-Asp-tRNA(Asn) or phospho-Glu-tRNA(Gln). This Clostridium botulinum (strain Langeland / NCTC 10281 / Type F) protein is Aspartyl/glutamyl-tRNA(Asn/Gln) amidotransferase subunit B.